Here is a 331-residue protein sequence, read N- to C-terminus: ADP-L-glycero-D-manno-heptose-6-epimerase (331 aa).

Residues 11-12 (FI), 32-33 (DN), Lys39, Lys54, 75-79 (EGACS), and Asn92 contribute to the NADP(+) site. Catalysis depends on Tyr139, which acts as the Proton acceptor. Lys143 lines the NADP(+) pocket. Asn168 serves as a coordination point for substrate. Residues Val169 and Lys177 each contribute to the NADP(+) site. Residue Lys177 is the Proton acceptor of the active site. Residues Arg179, His186, 200–203 (FGEY), Arg213, and Tyr292 contribute to the substrate site.

This sequence belongs to the NAD(P)-dependent epimerase/dehydratase family. HldD subfamily. As to quaternary structure, homopentamer. Requires NADP(+) as cofactor.

It carries out the reaction ADP-D-glycero-beta-D-manno-heptose = ADP-L-glycero-beta-D-manno-heptose. The protein operates within nucleotide-sugar biosynthesis; ADP-L-glycero-beta-D-manno-heptose biosynthesis; ADP-L-glycero-beta-D-manno-heptose from D-glycero-beta-D-manno-heptose 7-phosphate: step 4/4. In terms of biological role, catalyzes the interconversion between ADP-D-glycero-beta-D-manno-heptose and ADP-L-glycero-beta-D-manno-heptose via an epimerization at carbon 6 of the heptose. The protein is ADP-L-glycero-D-manno-heptose-6-epimerase of Ralstonia pickettii (strain 12J).